A 351-amino-acid polypeptide reads, in one-letter code: sn-glycerol-3-phosphate import ATP-binding protein UgpC (351 aa).

Positions 4 to 235 constitute an ABC transporter domain; the sequence is IVLDNVRKSY…PASTFVATFI (232 aa). 37-44 lines the ATP pocket; sequence GPSGCGKS.

The protein belongs to the ABC transporter superfamily. sn-glycerol-3-phosphate importer (TC 3.A.1.1.3) family. As to quaternary structure, the complex is composed of two ATP-binding proteins (UgpC), two transmembrane proteins (UgpA and UgpE) and a solute-binding protein (UgpB).

It localises to the cell inner membrane. The enzyme catalyses sn-glycerol 3-phosphate(out) + ATP + H2O = sn-glycerol 3-phosphate(in) + ADP + phosphate + H(+). Its function is as follows. Part of the ABC transporter complex UgpBAEC involved in sn-glycerol-3-phosphate (G3P) import. Responsible for energy coupling to the transport system. The protein is sn-glycerol-3-phosphate import ATP-binding protein UgpC of Brucella abortus biovar 1 (strain 9-941).